The chain runs to 130 residues: Large ribosomal subunit protein uL14 (130 aa).

The protein belongs to the universal ribosomal protein uL14 family. In terms of assembly, part of the 50S ribosomal subunit. Forms a cluster with proteins L3 and L19. In the 70S ribosome, L14 and L19 interact and together make contacts with the 16S rRNA in bridges B5 and B8.

Its function is as follows. Binds to 23S rRNA. Forms part of two intersubunit bridges in the 70S ribosome. In Leptospira biflexa serovar Patoc (strain Patoc 1 / Ames), this protein is Large ribosomal subunit protein uL14.